The sequence spans 396 residues: Obg-like ATPase 1 (396 aa).

One can recognise an OBG-type G domain in the interval 23–283 (LKIGIVGLPN…LSAEERQKYL (261 aa)). 32-37 (NVGKST) is an ATP binding site. Mg(2+) is bound by residues Ser-36 and Thr-56. Leu-231 contacts ATP. A Nuclear export signal motif is present at residues 267-274 (LELKLQEL). N6-acetyllysine is present on Lys-294. Positions 304-387 (QLEYFFTAGP…EDGDIIFFKF (84 aa)) constitute a TGS domain.

Belongs to the TRAFAC class OBG-HflX-like GTPase superfamily. OBG GTPase family. YchF/OLA1 subfamily. As to quaternary structure, monomer. It depends on Mg(2+) as a cofactor. In terms of tissue distribution, expressed in all tissues tested but its expression is more abundant in testis, liver, lung, and brain. Overexpressed in several malignancies, including cancers of the colon, rectum, ovary, lung, stomach, and uterus.

It is found in the cytoplasm. The protein localises to the nucleus. It localises to the nucleolus. Its function is as follows. Hydrolyzes ATP, and can also hydrolyze GTP with lower efficiency. Has lower affinity for GTP. This Homo sapiens (Human) protein is Obg-like ATPase 1.